Reading from the N-terminus, the 294-residue chain is HTH-type transcriptional regulator ClcR (294 aa).

One can recognise an HTH lysR-type domain in the interval 1 to 58 (MEFRQLRYFIAVAEEGNIGAAARRLHISQPPITRQIQALEQDLGVVLFERTHRGVELT). The H-T-H motif DNA-binding region spans 18-37 (IGAAARRLHISQPPITRQIQ).

This sequence belongs to the LysR transcriptional regulatory family.

The protein localises to the cytoplasm. Functionally, involved in regulation of chlorinated catechol metabolism. Transcriptional activator of the clcABD chlorocatechol oxidative operon. The sequence is that of HTH-type transcriptional regulator ClcR (clcR) from Pseudomonas putida (Arthrobacter siderocapsulatus).